The chain runs to 1143 residues: Disease resistance protein Piks-1 (1143 aa).

The tract at residues Met1–Gln190 is structured coiled coil (CC) domain. Residues Met189–Val258 enclose the HMA domain. An HMA-like domain region spans residues Lys191–Asp264. The NB-ARC domain occupies His282–Glu570. LRR repeat units follow at residues Phe681–Gln706, Ser708–Leu731, Lys732–Leu754, His756–Leu777, Gln778–Leu800, Asn802–Leu823, Asn824–Gln848, Met945–Thr968, Asp979–Phe1002, and Ala1004–Cys1027.

Belongs to the disease resistance NB-LRR family. Interacts with AVR-Pik through its N-terminal part containing the HMA-like domain.

Functionally, disease resistance (R) protein that specifically recognizes the AVR-Pik effector avirulence protein from M.oryzae. Resistance proteins guard the plant against pathogens that contain an appropriate avirulence protein via an indirect interaction with this avirulence protein. That triggers a defense system including the hypersensitive response, which restricts the pathogen growth. The sequence is that of Disease resistance protein Piks-1 from Oryza sativa subsp. japonica (Rice).